Reading from the N-terminus, the 319-residue chain is Cytochrome c biogenesis protein CcsA (319 aa).

The next 8 membrane-spanning stretches (helical) occupy residues 11 to 31 (VNFAFGGLLTAMLVYWSSLAF), 34 to 54 (ISGLNKLAALITLLVNIALAL), 71 to 91 (LYESLLFLAWGLTFVHLFIES), 97 to 117 (LIGAVSIPVAMFVTAFASLAL), 142 to 162 (IMMISYSILILGSLLSILFLI), 227 to 247 (IIGLGFPLLTIGIVAGAVWAN), 254 to 274 (WSWDPKETWALITWLIFAAYL), and 288 to 308 (AILASVGFLVVWICYLGVNFL).

It belongs to the CcmF/CycK/Ccl1/NrfE/CcsA family. As to quaternary structure, may interact with Ccs1.

Its subcellular location is the plastid. It localises to the chloroplast thylakoid membrane. Its function is as follows. Required during biogenesis of c-type cytochromes (cytochrome c6 and cytochrome f) at the step of heme attachment. The chain is Cytochrome c biogenesis protein CcsA from Porphyra purpurea (Red seaweed).